Here is a 451-residue protein sequence, read N- to C-terminus: Phosphoglucosamine mutase (451 aa).

Residue S101 is the Phosphoserine intermediate of the active site. Mg(2+) contacts are provided by S101, D243, D245, and D247. S101 bears the Phosphoserine mark.

It belongs to the phosphohexose mutase family. Requires Mg(2+) as cofactor. Activated by phosphorylation.

It catalyses the reaction alpha-D-glucosamine 1-phosphate = D-glucosamine 6-phosphate. Its function is as follows. Catalyzes the conversion of glucosamine-6-phosphate to glucosamine-1-phosphate. In Geobacter metallireducens (strain ATCC 53774 / DSM 7210 / GS-15), this protein is Phosphoglucosamine mutase.